Reading from the N-terminus, the 722-residue chain is MEDRLQMDNGLIAQKIVSVHLKDPALKELGKASDKQVQGPPPGPEASPEAQPAQGVMEHAGQGDCKAAGEGPSPRRRGCAPESEPAADGDPGLSSPELCQLHLSICHECLELENSTIDSVRSASAENIPDLPCDHSGVEGAAGELCPERKGKRVNISGKAPNILLYVGSGSEEALGRLQQVRSVLTDCVDTDSYTLYHLLEDSALRDPWSDNCLLLVIASRDPIPKDIQHKFMAYLSQGGKVLGLSSPFTLGGFRVTRRDVLRNTVQNLVFSKADGTEVRLSVLSSGYVYEEGPSLGRLQGHLENEDKDKMIVHVPFGTLGGEAVLCQVHLELPPGASLVQTADDFNVLKSSNVRRHEVLKEILTALGLSCDAPQVPALTPLYLLLAAEETQDPFMQWLGRHTDPEGIIKSSKLSLQFVSSYTSEAEITPSSMPVVTDPEAFSSEHFSLETYRQNLQTTRLGKVILFAEVTSTTMSLLDGLMFEMPQEMGLIAIAVRQTQGKGRGPNAWLSPVGCALSTLLVFIPLRSQLGQRIPFVQHLMSLAVVEAVRSIPGYEDINLRVKWPNDIYYSDLMKIGGVLVNSTLMGETFYILIGCGFNVTNSNPTICINDLIEEHNKQHGAGLKPLRADCLIARAVTVLEKLIDRFQDQGPDGVLPLYYKYWVHGGQQVRLGSTEGPQASIVGLDDSGFLQVHQEDGGVVTVHPDGNSFDMLRNLIVPKRQ.

A disordered region spans residues 27–93 (KELGKASDKQ…EPAADGDPGL (67 aa)). Residues 46–55 (ASPEAQPAQG) show a composition bias toward low complexity. At serine 295 the chain carries Phosphoserine. The region spanning 459-648 (TRLGKVILFA…VLEKLIDRFQ (190 aa)) is the BPL/LPL catalytic domain.

It belongs to the biotin--protein ligase family. In terms of assembly, monomer.

It is found in the cytoplasm. The protein localises to the mitochondrion. The enzyme catalyses apo-[methylmalonyl-CoA:pyruvate carboxytransferase] + biotin + ATP = holo-[methylmalonyl-CoA:pyruvate carboxytransferase] + AMP + diphosphate + H(+). It carries out the reaction apo-[propionyl-CoA:carbon-dioxide ligase (ADP-forming)] + biotin + ATP = holo-[propionyl-CoA:carbon-dioxide ligase (ADP-forming)] + AMP + diphosphate + H(+). The catalysed reaction is apo-[3-methylcrotonoyl-CoA:carbon-dioxide ligase (ADP-forming)] + biotin + ATP = holo-[3-methylcrotonoyl-CoA:carbon-dioxide ligase (ADP-forming)] + AMP + diphosphate + H(+). It catalyses the reaction biotin + L-lysyl-[protein] + ATP = N(6)-biotinyl-L-lysyl-[protein] + AMP + diphosphate + H(+). Biotin--protein ligase catalyzing the biotinylation of the 4 biotin-dependent carboxylases acetyl-CoA-carboxylase, pyruvate carboxylase, propionyl-CoA carboxylase, and methylcrotonyl-CoA carboxylase. This is Biotin--protein ligase from Mus musculus (Mouse).